The sequence spans 518 residues: Glutamate--cysteine ligase (518 aa).

This sequence belongs to the glutamate--cysteine ligase type 1 family. Type 1 subfamily.

It catalyses the reaction L-cysteine + L-glutamate + ATP = gamma-L-glutamyl-L-cysteine + ADP + phosphate + H(+). The protein operates within sulfur metabolism; glutathione biosynthesis; glutathione from L-cysteine and L-glutamate: step 1/2. In Escherichia coli O157:H7, this protein is Glutamate--cysteine ligase.